The primary structure comprises 602 residues: Probable beta-glucosidase btgE (602 aa).

The N-terminal stretch at 1 to 18 is a signal peptide; sequence MRGAFLAAAAAVAGTAMA. Disordered regions lie at residues 61-94 and 116-166; these read PPTLVPINTPAPEPSSSSSSEVPSVPSSESSVVT and GVDA…TSFS. A compositionally biased stretch (low complexity) spans 74 to 94; the sequence is PSSSSSSEVPSVPSSESSVVT. Over residues 152 to 166 the composition is skewed to polar residues; sequence TSESPLPTPGVTSFS. Catalysis depends on Glu-443, which acts as the Proton donor. Glu-538 serves as the catalytic Nucleophile.

The protein belongs to the glycosyl hydrolase 17 family.

It is found in the secreted. It localises to the cell wall. It carries out the reaction Hydrolysis of terminal, non-reducing beta-D-glucosyl residues with release of beta-D-glucose.. Its pathway is glycan metabolism; cellulose degradation. Functionally, beta-glucosidases are one of a number of cellulolytic enzymes involved in the degradation of cellulosic biomass. Catalyzes the last step releasing glucose from the inhibitory cellobiose. The chain is Probable beta-glucosidase btgE (btgE) from Aspergillus flavus (strain ATCC 200026 / FGSC A1120 / IAM 13836 / NRRL 3357 / JCM 12722 / SRRC 167).